The following is an 815-amino-acid chain: Bifunctional aspartokinase/homoserine dehydrogenase (815 aa).

Residues 1–249 (MRVLKFGGTS…VPDARLLPTL (249 aa)) are aspartokinase. The segment at 250–470 (SYREAMELSY…NNKKVVDMFL (221 aa)) is interface. 2 ACT domains span residues 320 to 392 (VSGP…PIEV) and 401 to 478 (VVGD…GVGG). The segment at 471 to 815 (VGVGGVGGEL…FADILRTLQH (345 aa)) is homoserine dehydrogenase. NAD(+) is bound by residues Val-473, Gly-475, Val-476, Ala-504, and Thr-555. Position 476 (Val-476) interacts with NADP(+). Val-476 serves as a coordination point for NADPH. Thr-555 contributes to the NADP(+) binding site. Residues Thr-555, Ser-556, and Lys-579 each contribute to the NADPH site. Lys-579 provides a ligand contact to NADP(+). Na(+)-binding residues include Glu-606, Val-609, Ala-611, and Leu-613. 2 residues coordinate NADP(+): Gly-664 and Glu-667. Positions 667 and 678 each coordinate L-homoserine. Catalysis depends on Lys-682, which acts as the Proton donor. Gly-797 provides a ligand contact to NAD(+). Residue Gly-797 coordinates NADP(+). Gly-797 is a binding site for NADPH.

It in the N-terminal section; belongs to the aspartokinase family. The protein in the C-terminal section; belongs to the homoserine dehydrogenase family. In terms of assembly, homotetramer. A metal cation serves as cofactor.

The catalysed reaction is L-homoserine + NADP(+) = L-aspartate 4-semialdehyde + NADPH + H(+). The enzyme catalyses L-homoserine + NAD(+) = L-aspartate 4-semialdehyde + NADH + H(+). It carries out the reaction L-aspartate + ATP = 4-phospho-L-aspartate + ADP. Its pathway is amino-acid biosynthesis; L-lysine biosynthesis via DAP pathway; (S)-tetrahydrodipicolinate from L-aspartate: step 1/4. It functions in the pathway amino-acid biosynthesis; L-methionine biosynthesis via de novo pathway; L-homoserine from L-aspartate: step 1/3. The protein operates within amino-acid biosynthesis; L-methionine biosynthesis via de novo pathway; L-homoserine from L-aspartate: step 3/3. It participates in amino-acid biosynthesis; L-threonine biosynthesis; L-threonine from L-aspartate: step 1/5. Its pathway is amino-acid biosynthesis; L-threonine biosynthesis; L-threonine from L-aspartate: step 3/5. In terms of biological role, bifunctional aspartate kinase and homoserine dehydrogenase that catalyzes the first and the third steps toward the synthesis of lysine, methionine and threonine from aspartate. This chain is Bifunctional aspartokinase/homoserine dehydrogenase (thrA), found in Haemophilus influenzae (strain ATCC 51907 / DSM 11121 / KW20 / Rd).